A 725-amino-acid chain; its full sequence is Eukaryotic translation initiation factor 3 subunit B (725 aa).

Residues 46–130 (NCVFIAGIPV…HTFTARSFKD (85 aa)) enclose the RRM domain. WD repeat units lie at residues 202–240 (RANWTETVFTWSPHGSYLSTIHKQGIILWGGKDYARAHR), 242–280 (AHTNVQYIDFSPCETYLVTYAAPEESNSWGDCEKDSLRI), 354–395 (VNIE…SMQR), 462–504 (PLSE…HAPK), 510–552 (DAGV…AKRT), and 554–594 (VIEH…FTFQ).

It belongs to the eIF-3 subunit B family. Component of the eukaryotic translation initiation factor 3 (eIF-3) complex.

It localises to the cytoplasm. RNA-binding component of the eukaryotic translation initiation factor 3 (eIF-3) complex, which is involved in protein synthesis of a specialized repertoire of mRNAs and, together with other initiation factors, stimulates binding of mRNA and methionyl-tRNAi to the 40S ribosome. The eIF-3 complex specifically targets and initiates translation of a subset of mRNAs involved in cell proliferation. In Caenorhabditis elegans, this protein is Eukaryotic translation initiation factor 3 subunit B.